The primary structure comprises 245 residues: Probable phosphatase YcdX (245 aa).

9 residues coordinate Zn(2+): His-7, His-9, His-15, His-40, Glu-73, His-101, His-131, Asp-192, and His-194.

The protein belongs to the PHP family. As to quaternary structure, homotrimer. The cofactor is Zn(2+).

In Escherichia coli O17:K52:H18 (strain UMN026 / ExPEC), this protein is Probable phosphatase YcdX.